Here is a 391-residue protein sequence, read N- to C-terminus: NADH-quinone oxidoreductase subunit D (391 aa).

It belongs to the complex I 49 kDa subunit family. As to quaternary structure, NDH-1 is composed of 14 different subunits. Subunits NuoB, C, D, E, F, and G constitute the peripheral sector of the complex.

The protein resides in the cell inner membrane. It catalyses the reaction a quinone + NADH + 5 H(+)(in) = a quinol + NAD(+) + 4 H(+)(out). Its function is as follows. NDH-1 shuttles electrons from NADH, via FMN and iron-sulfur (Fe-S) centers, to quinones in the respiratory chain. The immediate electron acceptor for the enzyme in this species is believed to be ubiquinone. Couples the redox reaction to proton translocation (for every two electrons transferred, four hydrogen ions are translocated across the cytoplasmic membrane), and thus conserves the redox energy in a proton gradient. The chain is NADH-quinone oxidoreductase subunit D from Rickettsia rickettsii (strain Iowa).